A 493-amino-acid polypeptide reads, in one-letter code: Aluminum-activated malate transporter 1 (493 aa).

Transmembrane regions (helical) follow at residues 28–48 (VGLA…GPFT), 51–71 (FGIN…FSVG), 104–124 (TVEP…STFV), 133–153 (KFDY…LSGF), and 169–189 (VVIG…VWAG). Residues Ser320 and Ser327 each carry the phosphoserine modification. Thr385 carries the post-translational modification Phosphothreonine. Over residues 441-452 (DNDRSNNVDDSR) the composition is skewed to basic and acidic residues. The disordered stretch occupies residues 441-460 (DNDRSNNVDDSRGGSSQDSC).

This sequence belongs to the aromatic acid exporter (TC 2.A.85) family. Phosphorylated. A reversible phosphorylation is required for activation. In terms of tissue distribution, expressed in roots, but not in shoots. Detected in the root apex in absence of aluminum stress and in root apices, the stele and endodermis of the elongating zone of primary and lateral roots after aluminum stress. Not expressed in cortical and epidermal cells.

It localises to the cell membrane. Activated by external aluminum. Functionally, malate transporter critical for aluminum tolerance. The STOP1 transcription factor is required for ALMT1 expression. The protein is Aluminum-activated malate transporter 1 (ALMT1) of Arabidopsis thaliana (Mouse-ear cress).